The following is a 605-amino-acid chain: MRHFVTFVVGFLLSWGFLSSLQDPPSCRCRPWEPCWPDSHQWTSLNASIDGNLVHVQPVGSVCHDPHYDAVACGDVLDLSRNSGWRASNPATLQDWIWETGSGDNESCLLVSSSERPQEIPCHQGRLPLYSAAVKSTAHVQGVIRFAKDHNLRLVIKNTGHDATGRSAAPDSLQIHTYFLKDIHYDDNFLVHGDATGSGPAVTLGAGVVHSEVYKHGIDHKYSVVGGECPTVGIVGGFLQGGGVSSWSGFTRGLAVDNVLEYQVVTANAELVIANEHQNQDLFWALRGGGGGTFGVVTQATVRAFPDDPTVVSTLVLSSTRADTSFWVKAISRLLSILRSCNQQNVHGQLIITRPSVDILNAGLTLHFSNMTNVLHAETLLQPHIASLSEDQISTTLTSKFVANINSELRLDADIHPRGIGTLQTSMMISNELFGSSEGPLTVAQVFGKLPIGPNDLLFTSNLGGCIAANKGLDTAIHPAWRSSAHLVTYVRSVEPSIEAKKLALKEITNKYMPILYSMQPSFKVSYRNLGDPNEKNYQEVFWGEKVYKRLASIKAKLDPDGLFISKLGVGSEDWDTEGMCYQPQNRVSQPLRSLKYFLSVLKDT.

A signal peptide spans 1–20 (MRHFVTFVVGFLLSWGFLSS). N-linked (GlcNAc...) asparagine glycans are attached at residues Asn-46 and Asn-105. An FAD-binding PCMH-type domain is found at 122-307 (CHQGRLPLYS…TQATVRAFPD (186 aa)). Residue Asn-370 is glycosylated (N-linked (GlcNAc...) asparagine).

Belongs to the oxygen-dependent FAD-linked oxidoreductase family. FAD is required as a cofactor.

The protein operates within alkaloid biosynthesis; ergot alkaloid biosynthesis. Its function is as follows. FAD-linked oxidoreductase; part of the gene cluster that mediates the biosynthesis of fungal ergot alkaloid ergovaline, the predominant ergopeptine product in E.festucae var. lolii. DmaW catalyzes the first step of ergot alkaloid biosynthesis by condensing dimethylallyl diphosphate (DMAP) and tryptophan to form 4-dimethylallyl-L-tryptophan. The second step is catalyzed by the methyltransferase easF that methylates 4-dimethylallyl-L-tryptophan in the presence of S-adenosyl-L-methionine, resulting in the formation of 4-dimethylallyl-L-abrine. The catalase easC and the FAD-dependent oxidoreductase easE then transform 4-dimethylallyl-L-abrine to chanoclavine-I which is further oxidized by easD in the presence of NAD(+), resulting in the formation of chanoclavine-I aldehyde. Agroclavine dehydrogenase easG then mediates the conversion of chanoclavine-I aldehyde to agroclavine via a non-enzymatic adduct reaction: the substrate is an iminium intermediate that is formed spontaneously from chanoclavine-I aldehyde in the presence of glutathione. The presence of easA is not required to complete this reaction. Further conversion of agroclavine to paspalic acid is a two-step process involving oxidation of agroclavine to elymoclavine and of elymoclavine to paspalic acid, the second step being performed by the elymoclavine oxidase cloA. Paspalic acid is then further converted to D-lysergic acid. Ergovaline is assembled from D-lysergic acid and three different amino acids by the D-lysergyl-peptide-synthetase composed of a monomudular (lpsB) and a trimodular (lpsA) nonribosomal peptide synthetase subunit. The protein is FAD-linked oxidoreductase easE of Epichloe festucae var. lolii (Neotyphodium lolii).